The chain runs to 367 residues: 2-aminoethylphosphonate--pyruvate transaminase (367 aa).

Lys-193 is subject to N6-(pyridoxal phosphate)lysine.

Belongs to the class-V pyridoxal-phosphate-dependent aminotransferase family. PhnW subfamily. Homodimer. The cofactor is pyridoxal 5'-phosphate.

It catalyses the reaction (2-aminoethyl)phosphonate + pyruvate = phosphonoacetaldehyde + L-alanine. Involved in phosphonate degradation. The polypeptide is 2-aminoethylphosphonate--pyruvate transaminase (Vibrio vulnificus (strain YJ016)).